The chain runs to 55 residues: Large ribosomal subunit protein bL33 (55 aa).

It belongs to the bacterial ribosomal protein bL33 family.

The protein is Large ribosomal subunit protein bL33 of Buchnera aphidicola subsp. Acyrthosiphon pisum (strain 5A).